The following is a 756-amino-acid chain: Anaphase-promoting complex subunit 5 (756 aa).

TPR repeat units lie at residues 301–334 (RYAA…AQES), 522–555 (DGRY…KAQN), 581–614 (ISVL…SREY), and 678–711 (YSQQ…EQLR).

The protein belongs to the APC5 family. The APC/C is composed of at least 12 subunits.

It localises to the nucleus. The protein localises to the cytoplasm. The protein resides in the cytoskeleton. It is found in the spindle. Its pathway is protein modification; protein ubiquitination. In terms of biological role, component of the anaphase promoting complex/cyclosome (APC/C), a cell cycle-regulated E3 ubiquitin ligase that controls progression through mitosis and the G1 phase of the cell cycle. The APC/C complex acts by mediating ubiquitination and subsequent degradation of target proteins: it mainly mediates the formation of 'Lys-11'-linked polyubiquitin chains and, to a lower extent, the formation of 'Lys-48'- and 'Lys-63'-linked polyubiquitin chains. The APC/C complex catalyzes assembly of branched 'Lys-11'-/'Lys-48'-linked branched ubiquitin chains on target proteins. The protein is Anaphase-promoting complex subunit 5 (ANAPC5) of Gallus gallus (Chicken).